A 212-amino-acid chain; its full sequence is uncharacterized protein (212 aa).

This sequence belongs to the methyltransferase superfamily.

This is an uncharacterized protein from Synechocystis sp. (strain ATCC 27184 / PCC 6803 / Kazusa).